The sequence spans 145 residues: Putative sterol 14-demethylase-like protein (145 aa).

The chain crosses the membrane as a helical span at residues 5-25; it reads YYTLLKTSVAIIIVFVVAKLI.

This sequence belongs to the cytochrome P450 family. As to expression, expressed specifically in roots.

The protein resides in the membrane. In Arabidopsis thaliana (Mouse-ear cress), this protein is Putative sterol 14-demethylase-like protein (CYP51G2).